We begin with the raw amino-acid sequence, 403 residues long: DNA polymerase IV (403 aa).

Positions 23-203 (IAHMDCDAFY…KPVNILPGVG (181 aa)) constitute a UmuC domain. Residues Asp-27 and Asp-120 each coordinate Mg(2+). Glu-121 is an active-site residue.

Belongs to the DNA polymerase type-Y family. Monomer. Mg(2+) serves as cofactor.

It localises to the cytoplasm. The enzyme catalyses DNA(n) + a 2'-deoxyribonucleoside 5'-triphosphate = DNA(n+1) + diphosphate. In terms of biological role, poorly processive, error-prone DNA polymerase involved in untargeted mutagenesis. Copies undamaged DNA at stalled replication forks, which arise in vivo from mismatched or misaligned primer ends. These misaligned primers can be extended by PolIV. Exhibits no 3'-5' exonuclease (proofreading) activity. May be involved in translesional synthesis, in conjunction with the beta clamp from PolIII. The polypeptide is DNA polymerase IV (Caulobacter vibrioides (strain ATCC 19089 / CIP 103742 / CB 15) (Caulobacter crescentus)).